The chain runs to 920 residues: Translation initiation factor IF-2 (920 aa).

3 stretches are compositionally biased toward basic and acidic residues: residues 149-175 (EAEMKAAEEARQKEVAAPVVEKEEKPV), 186-197 (AEKKATADKAAK), and 255-265 (AKPEGADDKKK). Disordered stretches follow at residues 149 to 197 (EAEM…KAAK) and 245 to 319 (EAKK…KQRQ). The segment covering 301–311 (SSGGVGGWRSG) has biased composition (gly residues). One can recognise a tr-type G domain in the interval 418-585 (PRPPVVTVMG…NVLLQAEILE (168 aa)). Positions 427–434 (GHVDHGKT) are G1. 427–434 (GHVDHGKT) lines the GTP pocket. Residues 452–456 (GITQH) form a G2 region. The tract at residues 473–476 (DTPG) is G3. GTP contacts are provided by residues 473–477 (DTPGH) and 527–530 (NKID). The tract at residues 527 to 530 (NKID) is G4. The tract at residues 563–565 (SAK) is G5.

Belongs to the TRAFAC class translation factor GTPase superfamily. Classic translation factor GTPase family. IF-2 subfamily.

It localises to the cytoplasm. In terms of biological role, one of the essential components for the initiation of protein synthesis. Protects formylmethionyl-tRNA from spontaneous hydrolysis and promotes its binding to the 30S ribosomal subunits. Also involved in the hydrolysis of GTP during the formation of the 70S ribosomal complex. The chain is Translation initiation factor IF-2 from Polynucleobacter asymbioticus (strain DSM 18221 / CIP 109841 / QLW-P1DMWA-1) (Polynucleobacter necessarius subsp. asymbioticus).